Consider the following 616-residue polypeptide: UvrABC system protein C (616 aa).

Residues 12–91 (ESPGVYLWKD…IKEYHPRFNI (80 aa)) form the GIY-YIG domain. Residues 202–237 (SDVMHHVRERMLDASERLDFERAAELRDALAHLEKM) enclose the UVR domain.

It belongs to the UvrC family. As to quaternary structure, interacts with UvrB in an incision complex.

The protein resides in the cytoplasm. Its function is as follows. The UvrABC repair system catalyzes the recognition and processing of DNA lesions. UvrC both incises the 5' and 3' sides of the lesion. The N-terminal half is responsible for the 3' incision and the C-terminal half is responsible for the 5' incision. This is UvrABC system protein C from Gemmatimonas aurantiaca (strain DSM 14586 / JCM 11422 / NBRC 100505 / T-27).